The primary structure comprises 1043 residues: RNA-directed RNA polymerase (1043 aa).

A helical transmembrane segment spans residues Val-26–Tyr-42. Positions Lys-43–Lys-1043 are cytoplasmic. Residues Asn-105 to Tyr-291 are capping. Residues Glu-588–Lys-713 form the RdRp catalytic domain. The active-site For RdRp/TNTase activity is Asp-699. Disordered stretches follow at residues Asn-879 to Asp-902 and Asn-918 to Lys-1043. Low complexity-rich tracts occupy residues Ser-922–Ser-934 and Ser-1032–Lys-1043.

This sequence belongs to the nodaviridae RNA polymerase family. As to quaternary structure, homododecamer. Forms 2 stacked rings of 35-nm in diameter, arranged in a crown-like structure at the opening of virus-induced replication vesicles. Interacts with protein B2. The cofactor is Mn(2+).

Its subcellular location is the host mitochondrion outer membrane. The catalysed reaction is RNA(n) + a ribonucleoside 5'-triphosphate = RNA(n+1) + diphosphate. In terms of biological role, RNA-dependent RNA polymerase, which replicates the viral genome composed of 2 RNA segments, RNA1 and RNA2. Does not need an exogenous primer. Also possesses a terminal nucleotidyl transferase (TNTase) activity. The TNTase catalyzes the addition of nucleotide to the 3'-end of plus- and minus-stranded RNAs, probably to repair the 3'-end nucleotide loss. Forms the open necked connection to the cytosol of the virus-induced replication vesicles. Mediates viral RNA1 recruitment. The polypeptide is RNA-directed RNA polymerase (Nodamura virus (strain Mag115) (NoV)).